We begin with the raw amino-acid sequence, 434 residues long: Probable carboxypeptidase BDBG_01803 (434 aa).

The signal sequence occupies residues 1–20 (MKLSHLAAALSAQLVAPVAA). N35, N136, and N150 each carry an N-linked (GlcNAc...) asparagine glycan. Zn(2+) is bound at residue D160. The active-site Proton acceptor is the E192. E193 lines the Zn(2+) pocket. N343 carries an N-linked (GlcNAc...) asparagine glycan.

This sequence belongs to the peptidase M20A family. Zn(2+) serves as cofactor.

It is found in the secreted. The polypeptide is Probable carboxypeptidase BDBG_01803 (Blastomyces gilchristii (strain SLH14081) (Blastomyces dermatitidis)).